The chain runs to 196 residues: UPF0340 protein TT_C0214 (196 aa).

Belongs to the UPF0340 family.

This is UPF0340 protein TT_C0214 from Thermus thermophilus (strain ATCC BAA-163 / DSM 7039 / HB27).